The sequence spans 150 residues: FAD synthase (150 aa).

Residues 11–12, 16–19, D96, and Y124 each bind ATP; these read TF and HPGH.

This sequence belongs to the archaeal FAD synthase family. Homodimer. The cofactor is a divalent metal cation.

It catalyses the reaction FMN + ATP + H(+) = FAD + diphosphate. It participates in cofactor biosynthesis; FAD biosynthesis; FAD from FMN: step 1/1. Functionally, catalyzes the transfer of the AMP portion of ATP to flavin mononucleotide (FMN) to produce flavin adenine dinucleotide (FAD) coenzyme. This chain is FAD synthase, found in Methanocaldococcus fervens (strain DSM 4213 / JCM 15782 / AG86) (Methanococcus fervens).